Consider the following 264-residue polypeptide: Probable septum site-determining protein MinC (264 aa).

Positions 103 to 147 are disordered; the sequence is SHGRRPRGGNDAKDADRNDAQDAQGAPEHAQAAEAPASTSAIPPA. The span at 110–122 shows a compositional bias: basic and acidic residues; it reads GGNDAKDADRNDA. The span at 124-147 shows a compositional bias: low complexity; sequence DAQGAPEHAQAAEAPASTSAIPPA.

The protein belongs to the MinC family. As to quaternary structure, interacts with MinD and FtsZ.

Cell division inhibitor that blocks the formation of polar Z ring septums. Rapidly oscillates between the poles of the cell to destabilize FtsZ filaments that have formed before they mature into polar Z rings. Prevents FtsZ polymerization. The sequence is that of Probable septum site-determining protein MinC from Ralstonia pickettii (strain 12J).